The sequence spans 196 residues: Crossover junction endodeoxyribonuclease RuvC (196 aa).

Active-site residues include Asp-23, Glu-83, and His-156. The Mg(2+) site is built by Asp-23, Glu-83, and His-156.

It belongs to the RuvC family. Homodimer which binds Holliday junction (HJ) DNA. The HJ becomes 2-fold symmetrical on binding to RuvC with unstacked arms; it has a different conformation from HJ DNA in complex with RuvA. In the full resolvosome a probable DNA-RuvA(4)-RuvB(12)-RuvC(2) complex forms which resolves the HJ. Mg(2+) is required as a cofactor.

The protein localises to the cytoplasm. The catalysed reaction is Endonucleolytic cleavage at a junction such as a reciprocal single-stranded crossover between two homologous DNA duplexes (Holliday junction).. The RuvA-RuvB-RuvC complex processes Holliday junction (HJ) DNA during genetic recombination and DNA repair. Endonuclease that resolves HJ intermediates. Cleaves cruciform DNA by making single-stranded nicks across the HJ at symmetrical positions within the homologous arms, yielding a 5'-phosphate and a 3'-hydroxyl group; requires a central core of homology in the junction. The consensus cleavage sequence is 5'-(A/T)TT(C/G)-3'. Cleavage occurs on the 3'-side of the TT dinucleotide at the point of strand exchange. HJ branch migration catalyzed by RuvA-RuvB allows RuvC to scan DNA until it finds its consensus sequence, where it cleaves and resolves the cruciform DNA. The polypeptide is Crossover junction endodeoxyribonuclease RuvC (Treponema pallidum (strain Nichols)).